An 894-amino-acid chain; its full sequence is Bifunctional enzyme RhaA/RhaB (894 aa).

Residues 1–465 are rhamnulokinase; that stretch reads MGEYRLAVDI…TAFPVTYFLP (465 aa). Residues 466-894 form an L-rhamnose isomerase region; sequence QRSESHVSSR…KRESEKAKQR (429 aa). Mn(2+) is bound by residues histidine 730, aspartate 762, and aspartate 764.

The protein in the N-terminal section; belongs to the rhamnulokinase family. This sequence in the C-terminal section; belongs to the rhamnose isomerase family. The cofactor is Mn(2+).

The protein localises to the cytoplasm. It catalyses the reaction L-rhamnulose + ATP = L-rhamnulose 1-phosphate + ADP + H(+). The catalysed reaction is L-rhamnopyranose = L-rhamnulose. It participates in carbohydrate degradation; L-rhamnose degradation; glycerone phosphate from L-rhamnose: step 1/3. It functions in the pathway carbohydrate degradation; L-rhamnose degradation; glycerone phosphate from L-rhamnose: step 2/3. The protein is Bifunctional enzyme RhaA/RhaB (rhaAB) of Shouchella clausii (strain KSM-K16) (Alkalihalobacillus clausii).